Here is a 324-residue protein sequence, read N- to C-terminus: MTKLQLKYRELKIISVIAASENISHAATVLGIAQANVSKYLADFESKVGLKVFDRTTRQLMLTPFGTALLPYINDMLDRNEQLNNFIADYKHEKRGRVTIYAPTGIITYLSKHVIDKIKDIGDITLSLKTCNLERNAFYEGVEFPDDCDVLISYAPPKDESLVASFITQYAVTAYASQRYLEKHPISRPDELEHHSCILIDSMMIDDANIWRFNVAGSKEVRDYRVKGNYVCDNTQSALELARNHLGIVFAPDKSVQSDLQDGTLVPCFQQPYEWWLDLVAIFRKREYQPWRVQYVLDEMLREIRHQLAQSQQLRPEQAAESED.

In terms of domain architecture, HTH lysR-type spans 6–63; the sequence is LKYRELKIISVIAASENISHAATVLGIAQANVSKYLADFESKVGLKVFDRTTRQLMLT. The segment at residues 23–42 is a DNA-binding region (H-T-H motif); sequence ISHAATVLGIAQANVSKYLA.

It belongs to the LysR transcriptional regulatory family.

This is an uncharacterized protein from Escherichia coli (strain K12).